The following is a 133-amino-acid chain: Hydrogenase maturation factor HypA (133 aa).

Ni(2+) is bound at residue H2. Zn(2+)-binding residues include C73, C75, C105, and C108.

The protein belongs to the HypA/HybF family.

Functionally, involved in the maturation of [NiFe] hydrogenases. Required for nickel insertion into the metal center of the hydrogenase. This Methanosarcina barkeri (strain Fusaro / DSM 804) protein is Hydrogenase maturation factor HypA.